Here is a 161-residue protein sequence, read N- to C-terminus: Terminase, small subunit (161 aa).

The segment at 37-60 (KAEPFWHDNIRSKALDSWTPADLL) is helix-turn-helix (HTH). Positions 88–115 (EERDEGLIKDLRKQIVELQRTILAQRRD) form a coiled coil. DNA contacts are provided by K96, K100, R107, R114, and R128.

Belongs to the Hendrixvirinae small terminase family. As to quaternary structure, homononamer; forms a ring-like structure through which genomic DNA is translocated into the capsid. Interacts with the terminase small subunit; the active complex is composed of a pentamer ring of terminase large subunits and a nonamer ring of terminase small subunits. Binds a specific sequence on the viral genome. DNA transits through the central tunnel formed by the small subunit and sequence-specific recognition for packaging initiation and termination takes place as it emerges.

In terms of biological role, the terminase small subunit binds to the packaging initiation site and regulates the ATPase activity of the terminase large subunit. The terminase lies at a unique vertex of the procapsid and is composed of two subunits, a small terminase subunit involved in viral DNA recognition (packaging sequence), and a large terminase subunit possessing endonucleolytic and ATPase activities. Both terminase subunits heterooligomerize and are docked on the portal protein to form the packaging machine. Packaging initiates by TerS recognizing the packaging sequence in the viral DNA. The nuclease activity of TerL cuts the viral DNA and the terminase-DNA complex binds to the portal of a procapsid shell. DNA is translocated into the capsid, powered by the packaging ATPase in TerL, which continues until the next site is encountered at which point the motor stops and again cuts the DNA to release the nucleocapsid filled with a unit-length genome ('unit length' packaging). The chain is Terminase, small subunit (1) from Escherichia coli (Bacteriophage HK97).